A 232-amino-acid chain; its full sequence is 7-cyano-7-deazaguanine synthase (232 aa).

8–18 provides a ligand contact to ATP; it reads LSGGLDSATVL. Zn(2+) is bound by residues Cys188, Cys198, Cys201, and Cys204.

It belongs to the QueC family. Zn(2+) is required as a cofactor.

It carries out the reaction 7-carboxy-7-deazaguanine + NH4(+) + ATP = 7-cyano-7-deazaguanine + ADP + phosphate + H2O + H(+). It functions in the pathway purine metabolism; 7-cyano-7-deazaguanine biosynthesis. In terms of biological role, catalyzes the ATP-dependent conversion of 7-carboxy-7-deazaguanine (CDG) to 7-cyano-7-deazaguanine (preQ(0)). This is 7-cyano-7-deazaguanine synthase from Nitrosospira multiformis (strain ATCC 25196 / NCIMB 11849 / C 71).